The following is a 3027-amino-acid chain: DmX-like protein 1 (3027 aa).

WD repeat units follow at residues 108 to 145, 166 to 206, and 229 to 277; these read FLES…KPTE, KTAS…RTAV, and AHPR…NDCL. Residues S324, S422, S425, and S436 each carry the phosphoserine modification. Residues 420 to 433 show a composition bias toward polar residues; the sequence is PSSEASVEDSNQAD. Residues 420 to 450 are disordered; that stretch reads PSSEASVEDSNQADVKSDEETDDGVDDLKIN. Residues 476-516 form a WD 4 repeat; the sequence is DHQIEVLLSEWSKNADMLFSIHPMDGSLLVWHVDWLDEYQP. The disordered stretch occupies residues 563-584; the sequence is KQKPSGLTRSTSMLISSGHNKS. S574 is subject to Phosphoserine. WD repeat units lie at residues 580–621, 628–665, and 848–895; these read GHNK…ESAF, SHKS…RTPD, and GKDS…IPVS. S918 and S924 each carry phosphoserine. WD repeat units follow at residues 968–1010, 1134–1175, and 1211–1251; these read PSAG…GESA, SNTK…VQDQ, and GSPP…EPVI. Phosphoserine is present on residues S1830, S1896, S1908, and S1970. Disordered regions lie at residues 2367-2412 and 2446-2468; these read PSKE…SSAP and SRAE…DDDD. Acidic residues predominate over residues 2451–2468; sequence DSEESLGSDDDDNDDDDD. WD repeat units follow at residues 2742–2783, 2785–2824, 2836–2878, 2884–2923, 2926–2965, and 2978–3016; these read KAIN…TCFR, GGNS…CPVT, CHNK…ANSL, CHDS…QRQL, SHDS…LLHT, and NIGT…SPLN.

As to expression, expressed in bone, breast, eye, foreskin, heart, parathyroid, small intestine, testis, tonsils, placenta and uterus.

The chain is DmX-like protein 1 (DMXL1) from Homo sapiens (Human).